The primary structure comprises 20 residues: N-acetyl-D-galactosamine-binding lectin subunit B (20 aa).

As to quaternary structure, disulfide-linked heterodimer of A and B chains.

In terms of biological role, gal / GalNAc-specific lectin. Agglutinates both native and trypsin-treated rabbit erythrocytes but not human erythrocytes irrespective of blood group type. This chain is N-acetyl-D-galactosamine-binding lectin subunit B, found in Iris hollandica (Dutch iris).